Reading from the N-terminus, the 423-residue chain is F-box protein At1g52495 (423 aa).

The F-box domain maps to 49–95 (KLKDVHLPLDLIVEILKKLPTKSLMRFRCVSKPWSFIISKRRDFVES).

This is F-box protein At1g52495 from Arabidopsis thaliana (Mouse-ear cress).